Consider the following 203-residue polypeptide: Probable Tat proofreading chaperone DmsD (203 aa).

This sequence belongs to the TorD/DmsD family. DmsD subfamily.

Its function is as follows. Required for biogenesis/assembly of DMSO reductase, but not for the interaction of the DmsA signal peptide with the Tat system. May be part of a chaperone cascade complex that facilitates a folding-maturation pathway for the substrate protein. This Haemophilus influenzae (strain ATCC 51907 / DSM 11121 / KW20 / Rd) protein is Probable Tat proofreading chaperone DmsD.